The primary structure comprises 102 residues: Small ribosomal subunit protein uS14m (102 aa).

This sequence belongs to the universal ribosomal protein uS14 family.

Its subcellular location is the mitochondrion. The polypeptide is Small ribosomal subunit protein uS14m (RPS14) (Paramecium tetraurelia).